Reading from the N-terminus, the 246-residue chain is Probable H/ACA ribonucleoprotein complex subunit 1-like protein (246 aa).

Disordered regions lie at residues 1–61 (MSFR…GGYD) and 155–246 (PQVG…TKFD). RGG-box stretches follow at residues 4 to 59 (RGGR…GRGG) and 161 to 223 (RGRG…RGRG). Over residues 168–180 (RGGDRGRGGDRGR) the composition is skewed to basic and acidic residues. Residues 181 to 221 (GGFGGRGGGGGGFRGGSRGGFGGGDRGGFRGGRGGDFGGRG) show a composition bias toward gly residues.

It belongs to the GAR1 family. In terms of assembly, component of the small nucleolar ribonucleoprotein particle containing H/ACA-type snoRNAs (H/ACA snoRNPs).

It localises to the nucleus. The protein localises to the nucleolus. Required for ribosome biogenesis. Part of a complex which catalyzes pseudouridylation of rRNA. This involves the isomerization of uridine such that the ribose is subsequently attached to C5, instead of the normal N1. Pseudouridine ('psi') residues may serve to stabilize the conformation of rRNAs. The protein is Probable H/ACA ribonucleoprotein complex subunit 1-like protein of Caenorhabditis briggsae.